The primary structure comprises 440 residues: 23S rRNA (uracil(1939)-C(5))-methyltransferase RlmD (440 aa).

Residues 10 to 68 enclose the TRAM domain; sequence KALPTQAVEITIDNLDHHLTGVGRYQGKACFVEGVLPGEKVSVQITEQKKQYAHARLRQ. [4Fe-4S] cluster contacts are provided by cysteine 81, cysteine 87, cysteine 90, and cysteine 169. 6 residues coordinate S-adenosyl-L-methionine: glutamine 272, phenylalanine 301, asparagine 306, glutamate 322, aspartate 349, and aspartate 372. The Nucleophile role is filled by cysteine 398.

Belongs to the class I-like SAM-binding methyltransferase superfamily. RNA M5U methyltransferase family. RlmD subfamily.

The enzyme catalyses uridine(1939) in 23S rRNA + S-adenosyl-L-methionine = 5-methyluridine(1939) in 23S rRNA + S-adenosyl-L-homocysteine + H(+). Its function is as follows. Catalyzes the formation of 5-methyl-uridine at position 1939 (m5U1939) in 23S rRNA. The sequence is that of 23S rRNA (uracil(1939)-C(5))-methyltransferase RlmD from Tolumonas auensis (strain DSM 9187 / NBRC 110442 / TA 4).